The sequence spans 239 residues: Fatty acid metabolism regulator protein (239 aa).

Residues 6 to 74 (KGPASFAEKY…HGKPTQVNNF (69 aa)) form the HTH gntR-type domain. A DNA-binding region (H-T-H motif) is located at residues 34–53 (ERELSELIGVTRTTLREVLQ).

In terms of assembly, homodimer.

The protein resides in the cytoplasm. Multifunctional regulator of fatty acid metabolism. The polypeptide is Fatty acid metabolism regulator protein (Shewanella denitrificans (strain OS217 / ATCC BAA-1090 / DSM 15013)).